The chain runs to 66 residues: Large ribosomal subunit protein bL35 (66 aa).

Basic residues-rich tracts occupy residues 1 to 15 (MSKL…KRFK) and 22 to 43 (ILHK…RKRR). Residues 1 to 43 (MSKLKTRSSAAKRFKVTATGKILHKKAGKRHNLSKKSESRKRR) form a disordered region.

Belongs to the bacterial ribosomal protein bL35 family.

The protein is Large ribosomal subunit protein bL35 of Dictyoglomus turgidum (strain DSM 6724 / Z-1310).